The following is a 257-amino-acid chain: Zinc transporter ZupT (257 aa).

8 helical membrane passes run 5–25 (LILT…GVIG), 32–52 (VLAF…LMEM), 61–81 (GMSP…YFAL), 109–129 (AILL…ATYV), 137–157 (LGFG…LAVA), 171–191 (ILWA…TWLI), 195–215 (MISP…MVAL), and 236–256 (GVLC…TAGF). The Fe(2+) site is built by N120 and E123. Positions 123 and 148 each coordinate Zn(2+). Residues N149, E152, and E181 each contribute to the Fe(2+) site. E152 contacts Zn(2+).

It belongs to the ZIP transporter (TC 2.A.5) family. ZupT subfamily.

Its subcellular location is the cell inner membrane. It carries out the reaction Zn(2+)(in) = Zn(2+)(out). Functionally, mediates zinc uptake. May also transport other divalent cations. The protein is Zinc transporter ZupT of Enterobacter sp. (strain 638).